A 341-amino-acid polypeptide reads, in one-letter code: Phosphoribosylformylglycinamidine cyclo-ligase (341 aa).

Belongs to the AIR synthase family.

It localises to the cytoplasm. It catalyses the reaction 2-formamido-N(1)-(5-O-phospho-beta-D-ribosyl)acetamidine + ATP = 5-amino-1-(5-phospho-beta-D-ribosyl)imidazole + ADP + phosphate + H(+). It functions in the pathway purine metabolism; IMP biosynthesis via de novo pathway; 5-amino-1-(5-phospho-D-ribosyl)imidazole from N(2)-formyl-N(1)-(5-phospho-D-ribosyl)glycinamide: step 2/2. The sequence is that of Phosphoribosylformylglycinamidine cyclo-ligase from Xanthomonas oryzae pv. oryzae (strain MAFF 311018).